Consider the following 239-residue polypeptide: MGRKWNNIKDKKASKDANTSRIYAKFGREIYVAAKQGEPDPESNQALRVVLERAKTYNVPRTIIDRAVEKAKGGSEENYDELRYEGFGPNGAMVIVDTLTNNVNRTAADVRAAFSKNGGNMGVNGSVAYMFDATAVIGLEGKTSDEVLEILMEADVDVRDILEEEDAVIVYAEPDQFHAVQSALKDAGVEEFTVAELTMLAQNDVTLPEDAQAQFEKMVDALEDLEDVQQVYHNVDLGE.

It belongs to the TACO1 family. YeeN subfamily.

It is found in the cytoplasm. The polypeptide is Probable transcriptional regulatory protein BCAH187_A0615 (Bacillus cereus (strain AH187)).